The chain runs to 416 residues: Adenylosuccinate synthetase (416 aa).

GTP contacts are provided by residues 13–19 (GDEGKGK) and 41–43 (GHT). Asp-14 functions as the Proton acceptor in the catalytic mechanism. 2 residues coordinate Mg(2+): Asp-14 and Gly-41. IMP-binding positions include 14–17 (DEGK), 39–42 (NAGH), Thr-126, Arg-140, Gln-220, Thr-235, and Arg-299. His-42 acts as the Proton donor in catalysis. A substrate-binding site is contributed by 295-301 (VSTGRKR). GTP is bound by residues Arg-301, 327–329 (KLD), and 405–407 (STS).

It belongs to the adenylosuccinate synthetase family. In terms of assembly, homodimer. Mg(2+) serves as cofactor.

The protein resides in the cytoplasm. It catalyses the reaction IMP + L-aspartate + GTP = N(6)-(1,2-dicarboxyethyl)-AMP + GDP + phosphate + 2 H(+). Its pathway is purine metabolism; AMP biosynthesis via de novo pathway; AMP from IMP: step 1/2. Plays an important role in the de novo pathway of purine nucleotide biosynthesis. Catalyzes the first committed step in the biosynthesis of AMP from IMP. The polypeptide is Adenylosuccinate synthetase (Campylobacter jejuni subsp. jejuni serotype O:23/36 (strain 81-176)).